The following is a 426-amino-acid chain: Zinc finger protein 662 (426 aa).

The region spanning 1–44 (MLENYGAVASLAAFPFPKPALISQLERGETPWCSVPRGALDGEA) is the KRAB domain. C2H2-type zinc fingers lie at residues 192–214 (YICE…QKTH), 220–242 (YGCK…QRIH), 248–270 (YECQ…QRIH), 276–298 (FECK…QRIH), 304–326 (YTCK…QRMH), 332–354 (YECK…QRVH), 360–382 (HECT…QRIH), and 388–410 (YKCN…QRRH).

Belongs to the krueppel C2H2-type zinc-finger protein family.

The protein localises to the nucleus. Functionally, may be involved in transcriptional regulation. In Homo sapiens (Human), this protein is Zinc finger protein 662 (ZNF662).